The following is a 413-amino-acid chain: L-cysteine:1D-myo-inositol 2-amino-2-deoxy-alpha-D-glucopyranoside ligase (413 aa).

The disordered stretch occupies residues 1-21 (MQSWSDTALPSVPGQGPPLRL). Position 43 (Cys-43) interacts with Zn(2+). L-cysteinyl-5'-AMP is bound by residues 43–46 (CGIT), Thr-58, and 81–83 (NVT). The 'HIGH' region signature appears at 45 to 55 (ITPYDATHLGH). Residues 187–192 (ERGGDP) carry the 'ERGGDP' region motif. Trp-227 contributes to the L-cysteinyl-5'-AMP binding site. Position 231 (Cys-231) interacts with Zn(2+). Position 249–251 (249–251 (GSD)) interacts with L-cysteinyl-5'-AMP. His-256 is a Zn(2+) binding site. Ile-283 is an L-cysteinyl-5'-AMP binding site. The short motif at 289–293 (KMSKS) is the 'KMSKS' region element.

The protein belongs to the class-I aminoacyl-tRNA synthetase family. MshC subfamily. In terms of assembly, monomer. The cofactor is Zn(2+).

It carries out the reaction 1D-myo-inositol 2-amino-2-deoxy-alpha-D-glucopyranoside + L-cysteine + ATP = 1D-myo-inositol 2-(L-cysteinylamino)-2-deoxy-alpha-D-glucopyranoside + AMP + diphosphate + H(+). Functionally, catalyzes the ATP-dependent condensation of GlcN-Ins and L-cysteine to form L-Cys-GlcN-Ins. The chain is L-cysteine:1D-myo-inositol 2-amino-2-deoxy-alpha-D-glucopyranoside ligase from Rhodococcus erythropolis (strain PR4 / NBRC 100887).